The chain runs to 271 residues: Type III pantothenate kinase (271 aa).

5–12 (DISNSVTK) contributes to the ATP binding site. Substrate is bound by residues Tyr85 and 92 to 95 (GADR). Asp94 functions as the Proton acceptor in the catalytic mechanism. A K(+)-binding site is contributed by Asp114. Thr117 is a binding site for ATP. A substrate-binding site is contributed by Thr169.

Belongs to the type III pantothenate kinase family. Homodimer. NH4(+) serves as cofactor. Requires K(+) as cofactor.

It is found in the cytoplasm. The catalysed reaction is (R)-pantothenate + ATP = (R)-4'-phosphopantothenate + ADP + H(+). The protein operates within cofactor biosynthesis; coenzyme A biosynthesis; CoA from (R)-pantothenate: step 1/5. Its function is as follows. Catalyzes the phosphorylation of pantothenate (Pan), the first step in CoA biosynthesis. The polypeptide is Type III pantothenate kinase (Methylacidiphilum infernorum (isolate V4) (Methylokorus infernorum (strain V4))).